A 255-amino-acid chain; its full sequence is Indole-3-glycerol phosphate synthase (255 aa).

The protein belongs to the TrpC family.

The catalysed reaction is 1-(2-carboxyphenylamino)-1-deoxy-D-ribulose 5-phosphate + H(+) = (1S,2R)-1-C-(indol-3-yl)glycerol 3-phosphate + CO2 + H2O. It functions in the pathway amino-acid biosynthesis; L-tryptophan biosynthesis; L-tryptophan from chorismate: step 4/5. The protein is Indole-3-glycerol phosphate synthase of Streptococcus mutans serotype c (strain ATCC 700610 / UA159).